The primary structure comprises 118 residues: Large ribosomal subunit protein bL17 (118 aa).

The protein belongs to the bacterial ribosomal protein bL17 family. In terms of assembly, part of the 50S ribosomal subunit. Contacts protein L32.

This is Large ribosomal subunit protein bL17 from Campylobacter concisus (strain 13826).